The primary structure comprises 257 residues: Ribonuclease HII (257 aa).

Residues 72-257 (ERVAGIDEVG…FSPVQKILQA (186 aa)) enclose the RNase H type-2 domain. A divalent metal cation is bound by residues D78, E79, and D170.

It belongs to the RNase HII family. Requires Mn(2+) as cofactor. The cofactor is Mg(2+).

The protein resides in the cytoplasm. The enzyme catalyses Endonucleolytic cleavage to 5'-phosphomonoester.. In terms of biological role, endonuclease that specifically degrades the RNA of RNA-DNA hybrids. The sequence is that of Ribonuclease HII from Levilactobacillus brevis (strain ATCC 367 / BCRC 12310 / CIP 105137 / JCM 1170 / LMG 11437 / NCIMB 947 / NCTC 947) (Lactobacillus brevis).